Consider the following 541-residue polypeptide: Carboxypeptidase Y homolog A (541 aa).

The first 17 residues, 1–17 (MKTFTAALLVGTALAAV), serve as a signal peptide directing secretion. The propeptide occupies 18–122 (PQQQPLQTQV…KLENYDLRVK (105 aa)). 5 cysteine pairs are disulfide-bonded: cysteine 177/cysteine 416, cysteine 311/cysteine 325, cysteine 335/cysteine 358, cysteine 342/cysteine 351, and cysteine 380/cysteine 386. Residue asparagine 208 is glycosylated (N-linked (GlcNAc...) asparagine). Residue serine 264 is part of the active site. Residue aspartate 455 is part of the active site. N-linked (GlcNAc...) asparagine glycans are attached at residues asparagine 485, asparagine 491, and asparagine 506. The active site involves histidine 517.

The protein belongs to the peptidase S10 family.

It is found in the vacuole. The catalysed reaction is Release of a C-terminal amino acid with broad specificity.. Vacuolar carboxypeptidase involved in degradation of small peptides. Digests preferentially peptides containing an aliphatic or hydrophobic residue in P1' position, as well as methionine, leucine or phenylalanine in P1 position of ester substrate. The chain is Carboxypeptidase Y homolog A (cpyA) from Uncinocarpus reesii (strain UAMH 1704).